Reading from the N-terminus, the 122-residue chain is Large ribosomal subunit protein uL14 (122 aa).

It belongs to the universal ribosomal protein uL14 family. In terms of assembly, part of the 50S ribosomal subunit. Forms a cluster with proteins L3 and L19. In the 70S ribosome, L14 and L19 interact and together make contacts with the 16S rRNA in bridges B5 and B8.

In terms of biological role, binds to 23S rRNA. Forms part of two intersubunit bridges in the 70S ribosome. The polypeptide is Large ribosomal subunit protein uL14 (Albidiferax ferrireducens (strain ATCC BAA-621 / DSM 15236 / T118) (Rhodoferax ferrireducens)).